A 346-amino-acid chain; its full sequence is Probable WRKY transcription factor 54 (346 aa).

The interval 109-130 (PVSCNGGDSGESKKKRLGVGKG) is disordered. A compositionally biased stretch (basic residues) spans 121–130 (KKKRLGVGKG). Positions 146 to 214 (VEAKSSEDRY…YIGYHTCTAN (69 aa)) form a DNA-binding region, WRKY. Residues 267 to 282 (VKEEQNNNGDQSKDYY) are compositionally biased toward basic and acidic residues. Positions 267–286 (VKEEQNNNGDQSKDYYEGSS) are disordered.

The protein belongs to the WRKY group III family. In terms of assembly, interacts with WRKY30. Binds to BZR2/BES1 to cooperatively regulate the expression of target genes. Interacts with ASK7/BIN2. In terms of processing, phosphorylated and destabilized by ASK7/BIN2. In terms of tissue distribution, expressed in leaves.

The protein resides in the nucleus. Transcription factor. Interacts specifically with the W box (5'-(T)TGAC[CT]-3'), a frequently occurring elicitor-responsive cis-acting element. Together with WRKY70, negative regulator of developmental senescence, probably via the regulation of several senescence-associated markers genes. Positive regulator of EDS1-dependent defense against E.amylovora. In collaboration with WRKY70, prevents stomatal closure and, consequently, osmotic stress tolerance. Together with WRKY46 and WRKY70, promotes brassinosteroid (BR)-regulated plant growth but prevent drought response by modulating gene expression. Negative regulator of SA biosynthesis. Prevents defense response to the necrotrophic pathogens P.carotovorum and B.cinerea, but promotes defense against biotrophic/hemibiotrophic pathogens P.syringae pv. tomato (Pst) DC3000, probably by regulating negatively the jasmonic acid (JA)/ethylene (ET) and positively the salicylic acid (SA) signaling pathways. The polypeptide is Probable WRKY transcription factor 54 (Arabidopsis thaliana (Mouse-ear cress)).